Consider the following 176-residue polypeptide: ATP-dependent protease subunit HslV (176 aa).

Thr-5 is a catalytic residue. Residues Ala-161, Cys-164, and Thr-167 each coordinate Na(+).

This sequence belongs to the peptidase T1B family. HslV subfamily. A double ring-shaped homohexamer of HslV is capped on each side by a ring-shaped HslU homohexamer. The assembly of the HslU/HslV complex is dependent on binding of ATP.

The protein localises to the cytoplasm. It carries out the reaction ATP-dependent cleavage of peptide bonds with broad specificity.. Allosterically activated by HslU binding. Functionally, protease subunit of a proteasome-like degradation complex believed to be a general protein degrading machinery. In Desulforamulus reducens (strain ATCC BAA-1160 / DSM 100696 / MI-1) (Desulfotomaculum reducens), this protein is ATP-dependent protease subunit HslV.